A 644-amino-acid polypeptide reads, in one-letter code: Protein SNOWY COTYLEDON 3 (644 aa).

3 disordered regions span residues 1–129, 162–252, and 290–414; these read MVAA…TRTE, ETAT…DGRL, and SDTD…SRVR. Residues 53-77 are compositionally biased toward low complexity; the sequence is SPSPSHSTTTTTTTATSTSTSSSSS. The span at 91 to 112 shows a compositional bias: polar residues; sequence LSRTTNSASNLVYTPSSLPKRS. Positions 172-190 are enriched in basic and acidic residues; it reads CTPERRRATPVRDQRENSK. 2 stretches are compositionally biased toward polar residues: residues 290 to 302 and 314 to 332; these read SDTDSVSSGSTNG and TRSLPRNGMASTKFWQETN. Low complexity-rich tracts occupy residues 343–370 and 397–412; these read SPQCSSPSSRISSISSKFSQSKRFSSDS and ATATSAPARTSSSPSR. A QWRF motif motif is present at residues 463-466; that stretch reads QWRF.

The protein belongs to the QWRF family. Expressed in young developing tissues, such as seedlings, roots, flowers, buds and young siliques, and to a lesser extent in mature green tissues.

Its subcellular location is the peroxisome. In terms of biological role, probable microtubule-associated peroxisomal protein required for chloroplast biogenesis and for the formation of the prolamellar body and prothylakoids in etioplasts. Not involved in peroxisomal metabolism, including mobilization of storage compounds during germination, fatty acid beta-oxydation or photorespiration. This Arabidopsis thaliana (Mouse-ear cress) protein is Protein SNOWY COTYLEDON 3 (SCO3).